Consider the following 146-residue polypeptide: Large ribosomal subunit protein uL15 (146 aa).

Positions 1-13 (MKLHELKPAEGSR) are enriched in basic and acidic residues. The disordered stretch occupies residues 1–51 (MKLHELKPAEGSRKVRNRVGRGTSSGNGKTSGRGQKGQKARSGGGVRLGFE). Gly residues-rich tracts occupy residues 23-35 (TSSG…GRGQ) and 42-51 (SGGGVRLGFE).

It belongs to the universal ribosomal protein uL15 family. In terms of assembly, part of the 50S ribosomal subunit.

Functionally, binds to the 23S rRNA. The sequence is that of Large ribosomal subunit protein uL15 from Streptococcus pneumoniae serotype 2 (strain D39 / NCTC 7466).